A 702-amino-acid polypeptide reads, in one-letter code: Polyribonucleotide nucleotidyltransferase 1 (702 aa).

The Mg(2+) site is built by D483 and D489. In terms of domain architecture, KH spans 550–609 (PQVTKLKVHPDKVREVIGAGGKVINKIIDETGVKINIENDGTIYIAAPDQESARVALEMI). Residues 619–687 (GEVYTGKVIK…PQGKIGLSRK (69 aa)) enclose the S1 motif domain.

It belongs to the polyribonucleotide nucleotidyltransferase family. Mg(2+) serves as cofactor.

It localises to the cytoplasm. The enzyme catalyses RNA(n+1) + phosphate = RNA(n) + a ribonucleoside 5'-diphosphate. Functionally, involved in mRNA degradation. Catalyzes the phosphorolysis of single-stranded polyribonucleotides processively in the 3'- to 5'-direction. The protein is Polyribonucleotide nucleotidyltransferase 1 of Alkaliphilus metalliredigens (strain QYMF).